A 379-amino-acid chain; its full sequence is Anhydro-N-acetylmuramic acid kinase (379 aa).

9 to 16 (GTSADGVD) serves as a coordination point for ATP.

Belongs to the anhydro-N-acetylmuramic acid kinase family.

It catalyses the reaction 1,6-anhydro-N-acetyl-beta-muramate + ATP + H2O = N-acetyl-D-muramate 6-phosphate + ADP + H(+). Its pathway is amino-sugar metabolism; 1,6-anhydro-N-acetylmuramate degradation. The protein operates within cell wall biogenesis; peptidoglycan recycling. Functionally, catalyzes the specific phosphorylation of 1,6-anhydro-N-acetylmuramic acid (anhMurNAc) with the simultaneous cleavage of the 1,6-anhydro ring, generating MurNAc-6-P. Is required for the utilization of anhMurNAc either imported from the medium or derived from its own cell wall murein, and thus plays a role in cell wall recycling. The sequence is that of Anhydro-N-acetylmuramic acid kinase from Prochlorococcus marinus (strain MIT 9303).